Here is a 332-residue protein sequence, read N- to C-terminus: 5-dehydro-2-deoxygluconokinase (332 aa).

The protein belongs to the carbohydrate kinase PfkB family.

The catalysed reaction is 5-dehydro-2-deoxy-D-gluconate + ATP = 6-phospho-5-dehydro-2-deoxy-D-gluconate + ADP + H(+). The protein operates within polyol metabolism; myo-inositol degradation into acetyl-CoA; acetyl-CoA from myo-inositol: step 5/7. In terms of biological role, catalyzes the phosphorylation of 5-dehydro-2-deoxy-D-gluconate (2-deoxy-5-keto-D-gluconate or DKG) to 6-phospho-5-dehydro-2-deoxy-D-gluconate (DKGP). The chain is 5-dehydro-2-deoxygluconokinase from Bacillus thuringiensis (strain Al Hakam).